Here is a 763-residue protein sequence, read N- to C-terminus: MSELLSFALFLASVLIYAWKAGRNTWWFAATLTVLGLFVVLNITLFASDYFTGDGINDAVLYTLTNSLTGAGVSKYILPGIGIVLGLTAVFGALGWILRRRRHHPHHFGYSLLALLLALGSVDASPAFRQITELVKSQSRDGDPDFAAYYKEPSKTIPDPKLNLVYIYGESLERTYFDNEAFPDLTPELGALKNEGLDFSHTQQLPGTDYTIAGMVASQCGIPLFAPFEGNASASVSSFFPQNICLGDILKNSGYQNYFVQGANLRFAGKDVFLKSHGFDHLFGSEELKSVVADPHYRNDWGFYDDTVLDEAWKKFEELSRSGQRFSLFTLTVDTHHPDGFISRTCNRKKYDFDGKPNQSFSAVSCSQENIATFINKIKASPWFKDTVIVVSSDHLAMNNTAWKYLNKQDRNNLFFVIRGDKPQQETLAVKRNTMDNGATVLDILGGDNYLGLGRSSLSGQSMSEIFLNIKEKTLAWKPDIIRLWKFPKEMKEFTIDQQKNMIAFSGSHFRLPLLLRVSDKRVEPLPESEYSAPLRFQLADFAPRDNFVWVDRCYKMAQLWAPELALSTNWCVSQGQLGGQQIVQHVDKTTWKGKTAFKDTVIDMARYKGNVDTLKIVDNDIRYKADSFIFNVAGAPEEVKQFSGISRPESWGRWSNAQLGDEVKIEYKHPLPKKFDLVITAKAYGNNASRPIPVRVGNEEQTLVLGNEVTTTTLHFDNPTDADTLVIVPPEPVSTNEGNILGHSPRKLGIGMVEIKVVEREG.

Helical transmembrane passes span Met1–Ala21, Trp26–Phe46, Ile77–Ile97, and Phe108–Phe128.

It belongs to the OpgB family.

The protein resides in the cell inner membrane. The catalysed reaction is a phosphatidylglycerol + a membrane-derived-oligosaccharide D-glucose = a 1,2-diacyl-sn-glycerol + a membrane-derived-oligosaccharide 6-(glycerophospho)-D-glucose.. It functions in the pathway glycan metabolism; osmoregulated periplasmic glucan (OPG) biosynthesis. Functionally, transfers a phosphoglycerol residue from phosphatidylglycerol to the membrane-bound nascent glucan backbones. The chain is Phosphoglycerol transferase I from Escherichia coli (strain SMS-3-5 / SECEC).